The sequence spans 104 residues: Type IV secretion system protein PtlB homolog (104 aa).

Residues 30-50 traverse the membrane as a helical segment; it reads IALLGIWFSIAFLALFPVALL.

It belongs to the virB3 family.

Its subcellular location is the cell membrane. The protein is Type IV secretion system protein PtlB homolog (ptlB) of Bordetella parapertussis (strain 12822 / ATCC BAA-587 / NCTC 13253).